A 253-amino-acid polypeptide reads, in one-letter code: Phosphoglycerate mutase 2 (253 aa).

Thr-3 is modified (phosphothreonine). Substrate contacts are provided by residues Arg-10–Asn-17, Cys-23–Gly-24, Arg-62, Glu-89–Tyr-92, Lys-100, and Arg-116–Arg-117. His-11 acts as the Tele-phosphohistidine intermediate in catalysis. At Ser-14 the chain carries Phosphoserine. Glu-89 (proton donor/acceptor) is an active-site residue. Ser-118 is subject to Phosphoserine. 2 positions are modified to phosphotyrosine: Tyr-132 and Tyr-133. At Ser-135 the chain carries Phosphoserine. Thr-152 carries the post-translational modification Phosphothreonine. Gly-187–Asn-188 lines the substrate pocket.

This sequence belongs to the phosphoglycerate mutase family. BPG-dependent PGAM subfamily. Homodimer. Interacts with ENO1. As to expression, expressed in the heart and muscle. Not found in the liver and brain.

The catalysed reaction is (2R)-2-phosphoglycerate = (2R)-3-phosphoglycerate. It carries out the reaction (2R)-3-phospho-glyceroyl phosphate = (2R)-2,3-bisphosphoglycerate + H(+). Functionally, interconversion of 3- and 2-phosphoglycerate with 2,3-bisphosphoglycerate as the primer of the reaction. Can also catalyze the reaction of EC 5.4.2.4 (synthase), but with a reduced activity. This Homo sapiens (Human) protein is Phosphoglycerate mutase 2 (PGAM2).